Reading from the N-terminus, the 154-residue chain is Protein X (154 aa).

The mitochondrial targeting sequence stretch occupies residues 68-117 (PCALRFTFARRMETTVNAHQVLPKVLHKRTLGLSAMSTTDLEAYFKDCVF).

It belongs to the orthohepadnavirus protein X family. In terms of assembly, may form homodimer. May interact with host CEBPA, CFLAR, CREB1, DDB1, E4F1, HBXIP, HSPD1/HSP60, NFKBIA, POLR2E and SMAD4. Interacts with host SMC5-SMC6 complex and induces its degradation. Interacts with host TRPC4AP; leading to prevent ubiquitination of TRPC4AP. Interacts with host PLSCR1; this interaction promotes ubiquitination and degradation of HBx and impairs HBx-mediated cell proliferation. Post-translationally, a fraction may be phosphorylated in insect cells and HepG2 cells, a human hepatoblastoma cell line. Phosphorylated in vitro by host protein kinase C or mitogen-activated protein kinase. N-acetylated in insect cells.

The protein resides in the host cytoplasm. Its subcellular location is the host nucleus. It is found in the host mitochondrion. Its function is as follows. Multifunctional protein that plays a role in silencing host antiviral defenses and promoting viral transcription. Does not seem to be essential for HBV infection. May be directly involved in development of cirrhosis and liver cancer (hepatocellular carcinoma). Most of cytosolic activities involve modulation of cytosolic calcium. The effect on apoptosis is controversial depending on the cell types in which the studies have been conducted. May induce apoptosis by localizing in mitochondria and causing loss of mitochondrial membrane potential. May also modulate apoptosis by binding host CFLAR, a key regulator of the death-inducing signaling complex (DISC). Promotes viral transcription by using the host E3 ubiquitin ligase DDB1 to target the SMC5-SMC6 complex to proteasomal degradation. This host complex would otherwise bind to viral episomal DNA, and prevents its transcription. Moderately stimulates transcription of many different viral and cellular transcription elements. Promoters and enhancers stimulated by HBx contain DNA binding sites for NF-kappa-B, AP-1, AP-2, c-EBP, ATF/CREB, or the calcium-activated factor NF-AT. The protein is Protein X of Hepatitis B virus genotype C subtype ayw (isolate China/Tibet127/2002) (HBV-C).